The primary structure comprises 95 residues: Aspartyl/glutamyl-tRNA(Asn/Gln) amidotransferase subunit C (95 aa).

This sequence belongs to the GatC family. In terms of assembly, heterotrimer of A, B and C subunits.

The enzyme catalyses L-glutamyl-tRNA(Gln) + L-glutamine + ATP + H2O = L-glutaminyl-tRNA(Gln) + L-glutamate + ADP + phosphate + H(+). It catalyses the reaction L-aspartyl-tRNA(Asn) + L-glutamine + ATP + H2O = L-asparaginyl-tRNA(Asn) + L-glutamate + ADP + phosphate + 2 H(+). Its function is as follows. Allows the formation of correctly charged Asn-tRNA(Asn) or Gln-tRNA(Gln) through the transamidation of misacylated Asp-tRNA(Asn) or Glu-tRNA(Gln) in organisms which lack either or both of asparaginyl-tRNA or glutaminyl-tRNA synthetases. The reaction takes place in the presence of glutamine and ATP through an activated phospho-Asp-tRNA(Asn) or phospho-Glu-tRNA(Gln). This is Aspartyl/glutamyl-tRNA(Asn/Gln) amidotransferase subunit C from Chromohalobacter salexigens (strain ATCC BAA-138 / DSM 3043 / CIP 106854 / NCIMB 13768 / 1H11).